A 392-amino-acid polypeptide reads, in one-letter code: Phosphoglycerate kinase (392 aa).

Residues 21 to 23 (DFN), Arg-36, 59 to 62 (HLGR), Arg-113, and Arg-146 each bind substrate. ATP contacts are provided by residues Lys-197, Glu-319, and 345–348 (GGDT).

The protein belongs to the phosphoglycerate kinase family. As to quaternary structure, monomer.

It localises to the cytoplasm. The catalysed reaction is (2R)-3-phosphoglycerate + ATP = (2R)-3-phospho-glyceroyl phosphate + ADP. It participates in carbohydrate degradation; glycolysis; pyruvate from D-glyceraldehyde 3-phosphate: step 2/5. The protein is Phosphoglycerate kinase of Francisella tularensis subsp. tularensis (strain FSC 198).